Here is a 60-residue protein sequence, read N- to C-terminus: Large ribosomal subunit protein bL32 (60 aa).

The segment at M1–E60 is disordered. Residues R49–E60 are compositionally biased toward basic residues.

This sequence belongs to the bacterial ribosomal protein bL32 family.

The protein is Large ribosomal subunit protein bL32 of Janthinobacterium sp. (strain Marseille) (Minibacterium massiliensis).